Reading from the N-terminus, the 209-residue chain is MGKCQVISHPLIQHKLSILRRQTTSTKDFRELVNEIAMLMGYEVSRDLPLEDVDIQTPVSKTVQKQLAGKKLAIVPILRAGIGMVDGLLSLVPAAKVGHIGMYRNEETLEPVEYLVKLPEDINQRQIFLVDPMLATGGSAILAVDSLKKRGAANIKFVCLVAAPEGVKKLQEAHPDIDIFTAALDDHLNEHGYIVPGLGDAGDRLFGTK.

Residues arginine 79, arginine 104, and 131–139 (DPMLATGGS) contribute to the 5-phospho-alpha-D-ribose 1-diphosphate site. Uracil contacts are provided by residues isoleucine 194 and 199–201 (GDA). Aspartate 200 lines the 5-phospho-alpha-D-ribose 1-diphosphate pocket.

It belongs to the UPRTase family. It depends on Mg(2+) as a cofactor.

The enzyme catalyses UMP + diphosphate = 5-phospho-alpha-D-ribose 1-diphosphate + uracil. It participates in pyrimidine metabolism; UMP biosynthesis via salvage pathway; UMP from uracil: step 1/1. Allosterically activated by GTP. Catalyzes the conversion of uracil and 5-phospho-alpha-D-ribose 1-diphosphate (PRPP) to UMP and diphosphate. This is Uracil phosphoribosyltransferase from Streptococcus pyogenes serotype M1.